The primary structure comprises 245 residues: 8-amino-3,8-dideoxy-manno-octulosonate cytidylyltransferase (245 aa).

Belongs to the KdsB family.

The protein localises to the cytoplasm. It catalyses the reaction 8-amino-3,8-dideoxy-alpha-D-manno-octulosonate + CTP = CMP-8-amino-3,8-dideoxy-alpha-D-manno-oct-2-ulosonate + diphosphate. The protein operates within bacterial outer membrane biogenesis; lipopolysaccharide biosynthesis. Activates KDO8N (a required 8-carbon sugar) for incorporation into bacterial lipopolysaccharide in the Shewanella genus. The chain is 8-amino-3,8-dideoxy-manno-octulosonate cytidylyltransferase from Shewanella baltica (strain OS195).